Here is a 101-residue protein sequence, read N- to C-terminus: Small ribosomal subunit protein uS14 (101 aa).

Belongs to the universal ribosomal protein uS14 family. As to quaternary structure, part of the 30S ribosomal subunit. Contacts proteins S3 and S10.

Its function is as follows. Binds 16S rRNA, required for the assembly of 30S particles and may also be responsible for determining the conformation of the 16S rRNA at the A site. The chain is Small ribosomal subunit protein uS14 from Gluconobacter oxydans (strain 621H) (Gluconobacter suboxydans).